A 534-amino-acid polypeptide reads, in one-letter code: CTP synthase (534 aa).

An amidoligase domain region spans residues 1-268 (MAAKYIFVTG…DQIVCDHLQL (268 aa)). A CTP-binding site is contributed by serine 14. UTP is bound at residue serine 14. An ATP-binding site is contributed by 15 to 20 (SLGKGI). Position 55 (tyrosine 55) interacts with L-glutamine. Aspartate 72 provides a ligand contact to ATP. Residues aspartate 72 and glutamate 142 each coordinate Mg(2+). CTP is bound by residues 149 to 151 (DIE), 189 to 194 (KSKPTQ), and lysine 225. Residues 189–194 (KSKPTQ) and lysine 225 contribute to the UTP site. In terms of domain architecture, Glutamine amidotransferase type-1 spans 293–534 (RIAIVGKYVE…FVRNALAAQA (242 aa)). L-glutamine is bound at residue glycine 355. The active-site Nucleophile; for glutamine hydrolysis is cysteine 382. L-glutamine contacts are provided by residues 383 to 386 (LGMQ), glutamate 406, and arginine 463. Active-site residues include histidine 508 and glutamate 510.

Belongs to the CTP synthase family. In terms of assembly, homotetramer.

The enzyme catalyses UTP + L-glutamine + ATP + H2O = CTP + L-glutamate + ADP + phosphate + 2 H(+). It carries out the reaction L-glutamine + H2O = L-glutamate + NH4(+). The catalysed reaction is UTP + NH4(+) + ATP = CTP + ADP + phosphate + 2 H(+). It functions in the pathway pyrimidine metabolism; CTP biosynthesis via de novo pathway; CTP from UDP: step 2/2. Its activity is regulated as follows. Allosterically activated by GTP, when glutamine is the substrate; GTP has no effect on the reaction when ammonia is the substrate. The allosteric effector GTP functions by stabilizing the protein conformation that binds the tetrahedral intermediate(s) formed during glutamine hydrolysis. Inhibited by the product CTP, via allosteric rather than competitive inhibition. Its function is as follows. Catalyzes the ATP-dependent amination of UTP to CTP with either L-glutamine or ammonia as the source of nitrogen. Regulates intracellular CTP levels through interactions with the four ribonucleotide triphosphates. The polypeptide is CTP synthase (Shouchella clausii (strain KSM-K16) (Alkalihalobacillus clausii)).